The chain runs to 160 residues: Cytochrome b6-f complex subunit 4 (160 aa).

Transmembrane regions (helical) follow at residues I36 to I56, L95 to E115, and P127 to A147.

This sequence belongs to the cytochrome b family. PetD subfamily. As to quaternary structure, the 4 large subunits of the cytochrome b6-f complex are cytochrome b6, subunit IV (17 kDa polypeptide, petD), cytochrome f and the Rieske protein, while the 4 small subunits are petG, petL, petM and petN. The complex functions as a dimer.

It is found in the plastid. The protein resides in the chloroplast thylakoid membrane. Functionally, component of the cytochrome b6-f complex, which mediates electron transfer between photosystem II (PSII) and photosystem I (PSI), cyclic electron flow around PSI, and state transitions. The polypeptide is Cytochrome b6-f complex subunit 4 (Gracilaria tenuistipitata var. liui (Red alga)).